A 397-amino-acid chain; its full sequence is Acetate kinase (397 aa).

N8 contributes to the Mg(2+) binding site. Residue K15 coordinates ATP. R89 serves as a coordination point for substrate. The active-site Proton donor/acceptor is D146. Residues 206-210 (HLGNG), 281-283 (DLR), and 329-333 (GIGEN) contribute to the ATP site. Mg(2+) is bound at residue E382.

The protein belongs to the acetokinase family. Homodimer. It depends on Mg(2+) as a cofactor. Mn(2+) is required as a cofactor.

Its subcellular location is the cytoplasm. It carries out the reaction acetate + ATP = acetyl phosphate + ADP. The protein operates within metabolic intermediate biosynthesis; acetyl-CoA biosynthesis; acetyl-CoA from acetate: step 1/2. Catalyzes the formation of acetyl phosphate from acetate and ATP. Can also catalyze the reverse reaction. The sequence is that of Acetate kinase from Bacillus cytotoxicus (strain DSM 22905 / CIP 110041 / 391-98 / NVH 391-98).